Consider the following 325-residue polypeptide: Glutaminase (325 aa).

Residues S76, N125, E169, N176, Y200, Y252, and V270 each contribute to the substrate site.

It belongs to the glutaminase family. As to quaternary structure, homotetramer.

The enzyme catalyses L-glutamine + H2O = L-glutamate + NH4(+). This chain is Glutaminase, found in Clavibacter michiganensis subsp. michiganensis (strain NCPPB 382).